The chain runs to 128 residues: MPKSFYDAVGGAKTFDAIVSRFYAQVAEDEVLRRVYPEDDLAGAEERLRMFLEQYWGGPRTYSEQRGHPRLRMRHAPFRISLIERDAWLRCMHTAVASIDSETLDDEHRRELLDYLEMAAHSLVNSPF.

Residues 23–36 (YAQVAEDEVLRRVY) constitute a cross-link (isodityrosine (Tyr-Tyr)). Residue Y36 is modified to 3',4'-dihydroxyphenylalanine. H75 contributes to the heme binding site.

The protein belongs to the truncated hemoglobin family. Group II subfamily. In terms of assembly, homododecamer. The cofactor is heme. In terms of processing, contains L-DOPA (3',4'-dihydroxyphenylalanine).

In Mycobacterium bovis (strain ATCC BAA-935 / AF2122/97), this protein is Group 2 truncated hemoglobin GlbO (glbO).